The chain runs to 549 residues: Adhesion G protein-coupled receptor G3 (549 aa).

The N-terminal stretch at 1 to 20 (MATPRGLGALLLLLLLPTSG) is a signal peptide. At 21–270 (QEKPTEGPRN…DQSTVHILTR (250 aa)) the chain is on the extracellular side. N-linked (GlcNAc...) asparagine glycosylation is found at asparagine 98, asparagine 144, and asparagine 210. Residues 107–262 (FYFSLEPSQV…ALLLRPTLDQ (156 aa)) enclose the GAIN-B domain. 2 disulfide bridges follow: cysteine 215/cysteine 244 and cysteine 233/cysteine 246. The tract at residues 215 to 262 (CVFWDVTKGTTGDWSSEGCSTEVRPEGTVCCCDHLTFFALLLRPTLDQ) is GPS. The segment at 251 to 259 (FFALLLRPT) is stachel. A helical transmembrane segment spans residues 271-295 (ISQAGCGVSMIFLAFTIILYAFLRL). At 296-304 (SRERFKSED) the chain is on the cytoplasmic side. A helical membrane pass occupies residues 305 to 326 (APKIHVALGGSLFLLNLAFLVN). Residues 327-338 (VGSGSKGSDAAC) are Extracellular-facing. An intrachain disulfide couples cysteine 338 to cysteine 420. Residues 339-364 (WARGAVFHYFLLCAFTWMGLEAFHLY) form a helical membrane-spanning segment. Over 365-378 (LLAVRVFNTYFGHY) the chain is Cytoplasmic. A helical transmembrane segment spans residues 379–400 (FLKLSLVGWGLPALMVIGTGSA). The Extracellular segment spans residues 401-428 (NSYGLYTIRDRENRTSLELCWFREGTTM). The N-linked (GlcNAc...) asparagine glycan is linked to asparagine 413. A helical transmembrane segment spans residues 429-454 (YALYITVHGYFLITFLFGMVVLALVV). Residues 455–474 (WKIFTLSRATAVKERGKNRK) lie on the Cytoplasmic side of the membrane. Residues 475–495 (KVLTLLGLSSLVGVTWGLAIF) traverse the membrane as a helical segment. Residues 496–501 (TPLGLS) are Extracellular-facing. The chain crosses the membrane as a helical span at residues 502-525 (TVYIFALFNSLQGVFICCWFTILY). Asparagine 510 is a binding site for cortisol. Residues 526 to 549 (LPSQSTTVSSSTARLDQAHSASQE) are Cytoplasmic-facing.

This sequence belongs to the G-protein coupled receptor 2 family. Adhesion G-protein coupled receptor (ADGR) subfamily. In terms of assembly, heterodimer of 2 chains generated by proteolytic processing; the large extracellular N-terminal fragment and the membrane-bound C-terminal fragment predominantly remain associated and non-covalently linked. Interacts with PRTN3; this interaction induces the activation of PAR2. Interacts with GNAO1 (when palmitoylated). In terms of processing, autoproteolytically processed at the GPS region of the GAIN-B domain; this cleavage modulates receptor activity. O- and N-glycosylated. As to expression, expressed in cultured primary dermal lymphatic endothelial cells. Highly expressed in polymorphonuclear cells (PMNs) including neutrophilic, eosinophilic, and basophilic granulocytes.

The protein localises to the cell membrane. Forms a heterodimer of 2 chains generated by proteolytic processing that remain associated through non-covalent interactions mediated by the GAIN-B domain. In the inactivated receptor, the Stachel sequence (also named stalk) is embedded in the GAIN-B domain, where it adopts a beta-strand conformation. On activation, the Stachel moves into the 7 transmembrane region and adopts a twisted hook-shaped configuration that forms contacts within the receptor, leading to coupling of a G-alpha protein, which activates signaling. The cleaved GAIN-B and N-terminal domains can then dissociate from the rest of the receptor. Its function is as follows. Adhesion G-protein coupled receptor (aGPCR) for glucocorticoid hormones such as cortisol, cortisone and 11-deoxycortisol. Ligand binding causes a conformation change that triggers signaling via guanine nucleotide-binding proteins (G proteins) and modulates the activity of downstream effectors, such as adenylate cyclase. ADGRG3/GPR97 is coupled to G(o)/GNAO1 G proteins and mediates signaling by inhibiting adenylate cyclase activity. May also signal through G-alpha(q)-proteins; additional evidence are however required to confirm this result in vivo. Plays a role in the regulation of various processes including B-cell development, inflammation or innate immunity. Regulates migration of lymphatic endothelial cells in vitro via the small GTPases RhoA and CDC42. Antibody ligation leads to the production and activation of antimicrobial mediators like reactive oxygen species (ROS) and myeloperoxidase (MPO) as well as enhanced bacteria uptake and killing by granulocytes. Additionally, collaborates with protease-activated receptor 2/PAR2 to stimulate neutrophil-driven antimicrobial responses and endothelial cell activation. This chain is Adhesion G protein-coupled receptor G3, found in Homo sapiens (Human).